Consider the following 358-residue polypeptide: Myb family transcription factor IPN2 (358 aa).

The interval 1-20 (MERMFPPKKPSTMNSHDRPM) is disordered. An HTH myb-type domain is found at 32 to 92 (TDPKPRLRWT…HLQKFRLGKQ (61 aa)). The segment at residues 63 to 88 (PKTIMRVMGVKGLTLYHLKSHLQKFR) is a DNA-binding region (H-T-H motif). Positions 127–171 (NMNEMQIEVQRRLHEQLEVQKHLQLRIEAQGKYMQSILEKAYQTL) form a coiled coil. An LHEQLE motif is present at residues 139–144 (LHEQLE). A disordered region spans residues 310–358 (IYDSKPEEKKFDASMKLERPSPRRAPLGERMSPMITTGTMAQGRSSPFG). Basic and acidic residues predominate over residues 311–330 (YDSKPEEKKFDASMKLERPS). Residues 343-358 (MITTGTMAQGRSSPFG) show a composition bias toward polar residues.

The protein belongs to the MYB-CC family. Interacts with NSP2. As to expression, expressed in leaves, stems, nodules and roots.

Its subcellular location is the nucleus. Its function is as follows. Transcriptional regulator required for Nod-factor-induced gene expression. Transcription activator involved in the induction of NIN and ENOD40 genes, which are required for rhizobial infection and early nodule development. Possesses strong transactivation activity in vitro. Does not seem to contribute to the early steps of the arbuscular mycorrhizal fungus infection and colonization processes in roots. The sequence is that of Myb family transcription factor IPN2 from Lotus japonicus (Lotus corniculatus var. japonicus).